The chain runs to 170 residues: MIDADGFRPNVGIILTDDQGRLLWARRVGGQDAWQFPQGGIKHNESPENALYRELEEEVGLCKADVEVLGVTQGWLRYRLPRRLVRDKEPKCVGQKQKWYLLRLVSNDSAIRLDASSPAEFDTWNWVSYWYPLGKVVAFKRDVYRRALKELSPVYNQYFLSTLGEGRALC.

The Nudix hydrolase domain maps to 6-149 (GFRPNVGIIL…KRDVYRRALK (144 aa)). The Nudix box motif lies at 39 to 60 (GGIKHNESPENALYRELEEEVG).

This sequence belongs to the Nudix hydrolase family. RppH subfamily. A divalent metal cation serves as cofactor.

In terms of biological role, accelerates the degradation of transcripts by removing pyrophosphate from the 5'-end of triphosphorylated RNA, leading to a more labile monophosphorylated state that can stimulate subsequent ribonuclease cleavage. The polypeptide is RNA pyrophosphohydrolase (Saccharophagus degradans (strain 2-40 / ATCC 43961 / DSM 17024)).